The sequence spans 85 residues: Putative membrane protein insertion efficiency factor (85 aa).

Positions 62-85 are disordered; that stretch reads PLGSDGYDPVPEPKDRKPPHSPAG.

It belongs to the UPF0161 family.

It localises to the cell inner membrane. In terms of biological role, could be involved in insertion of integral membrane proteins into the membrane. The sequence is that of Putative membrane protein insertion efficiency factor from Ruegeria pomeroyi (strain ATCC 700808 / DSM 15171 / DSS-3) (Silicibacter pomeroyi).